A 469-amino-acid polypeptide reads, in one-letter code: UDP-N-acetylmuramate--L-alanine ligase (469 aa).

Position 113 to 119 (113 to 119 (GTHGKTT)) interacts with ATP.

The protein belongs to the MurCDEF family.

The protein resides in the cytoplasm. It catalyses the reaction UDP-N-acetyl-alpha-D-muramate + L-alanine + ATP = UDP-N-acetyl-alpha-D-muramoyl-L-alanine + ADP + phosphate + H(+). It functions in the pathway cell wall biogenesis; peptidoglycan biosynthesis. Cell wall formation. The protein is UDP-N-acetylmuramate--L-alanine ligase of Neisseria meningitidis serogroup B (strain ATCC BAA-335 / MC58).